A 638-amino-acid chain; its full sequence is Epithelial sodium channel subunit beta (638 aa).

The Cytoplasmic portion of the chain corresponds to 1–50 (MPVKKYLLKCLHRLQKGPGYTYKELLVWYCNNTNTHGPKRIICEGPKKKA). A helical transmembrane segment spans residues 51-71 (MWFLLTLLFACLVCWQWGVFI). At 72 to 530 (QTYLSWEVSV…GGQFGFWMGG (459 aa)) the chain is on the extracellular side. 9 cysteine pairs are disulfide-bonded: Cys-98–Cys-270, Cys-182–Cys-187, Cys-194–Cys-201, Cys-247–Cys-254, Cys-359–Cys-446, Cys-384–Cys-442, Cys-388–Cys-438, Cys-397–Cys-424, and Cys-399–Cys-413. Residues Asn-135 and Asn-141 are each glycosylated (N-linked (GlcNAc...) asparagine). A glycan (N-linked (GlcNAc...) asparagine) is linked at Asn-205. Residues 531-551 (SVLCLIEFGEIIIDFIWITII) form a helical membrane-spanning segment. The Cytoplasmic portion of the chain corresponds to 552–638 (KLVASCKGLR…MESDSEVEAI (87 aa)). Residues 594 to 620 (SCRPHGEVYPDQQTLPIPGTPPPNYDS) are disordered. The PY motif; recruits WW domain-containing proteins and is thereby required for ubiquitination and inhibition of the channel by NEDD4 and NEDD4L signature appears at 614–618 (PPPNY). A phosphoserine mark is found at Ser-631 and Ser-633.

This sequence belongs to the amiloride-sensitive sodium channel (TC 1.A.6) family. SCNN1B subfamily. In terms of assembly, component of the heterotrimeric epithelial sodium channel (ENaC) composed of an alpha/SCNN1A, a beta/SCNN1B and a gamma/SCNN1G subunit. Interacts with WWP1 (via WW domains). Interacts with WWP2 (via WW domains); inhibits the channel. Interacts with the full-length immature form of PCSK9 (pro-PCSK9). Interacts (N-glycosylated) with BPIFA1; the interaction is direct and inhibits the proteolytic processing of SCNN1A and SCNN1G and the activation of ENaC. Post-translationally, ubiquitinated. Can be ubiquitinated at multiple sites and undergo monoubiquitination and polyubiquitination. Ubiquitination by NEDD4 or NEDD4L inhibits the ENaC channel through endocytosis, intracellular retention and degradation of its individual subunits. However, some studies could not confirm the ubiquitination of this subunit of the ENaC. In terms of processing, N-glycosylated. N-glycosylation is required for interaction with BPIFA1. Phosphorylated on serine and threonine residues. Aldosterone and insulin increase the basal level of phosphorylation. In terms of tissue distribution, lung and kidney.

It is found in the apical cell membrane. It localises to the cytoplasmic vesicle membrane. It carries out the reaction Na(+)(in) = Na(+)(out). With respect to regulation, originally identified and characterized by its inhibition by the diuretic drug amiloride. Functionally, this is one of the three pore-forming subunits of the heterotrimeric epithelial sodium channel (ENaC), a critical regulator of sodium balance and fluid homeostasis. ENaC operates in epithelial tissues, where it mediates the electrodiffusion of sodium ions from extracellular fluid through the apical membrane of cells, with water following osmotically. It plays a key role in maintaining sodium homeostasis through electrogenic sodium reabsorption in the kidneys. This subunit is not essential for ENaC function in airway surface liquid homeostasis and proper mucus clearance. In Mus musculus (Mouse), this protein is Epithelial sodium channel subunit beta.